The primary structure comprises 95 residues: Small ribosomal subunit protein bS6 (95 aa).

It belongs to the bacterial ribosomal protein bS6 family.

Functionally, binds together with bS18 to 16S ribosomal RNA. The polypeptide is Small ribosomal subunit protein bS6 (Bacillus cytotoxicus (strain DSM 22905 / CIP 110041 / 391-98 / NVH 391-98)).